Reading from the N-terminus, the 257-residue chain is Imidazole glycerol phosphate synthase subunit HisF (257 aa).

Catalysis depends on residues Asp11 and Asp130.

It belongs to the HisA/HisF family. In terms of assembly, heterodimer of HisH and HisF.

Its subcellular location is the cytoplasm. The catalysed reaction is 5-[(5-phospho-1-deoxy-D-ribulos-1-ylimino)methylamino]-1-(5-phospho-beta-D-ribosyl)imidazole-4-carboxamide + L-glutamine = D-erythro-1-(imidazol-4-yl)glycerol 3-phosphate + 5-amino-1-(5-phospho-beta-D-ribosyl)imidazole-4-carboxamide + L-glutamate + H(+). It participates in amino-acid biosynthesis; L-histidine biosynthesis; L-histidine from 5-phospho-alpha-D-ribose 1-diphosphate: step 5/9. Its function is as follows. IGPS catalyzes the conversion of PRFAR and glutamine to IGP, AICAR and glutamate. The HisF subunit catalyzes the cyclization activity that produces IGP and AICAR from PRFAR using the ammonia provided by the HisH subunit. This Pseudoalteromonas atlantica (strain T6c / ATCC BAA-1087) protein is Imidazole glycerol phosphate synthase subunit HisF.